The following is an 82-amino-acid chain: Cortexin-1 (82 aa).

The segment at 1 to 20 (MSSAWTLSPEPLPPSTGPPV) is disordered. Residues 30–50 (TVFAFVLCLLVVLVLLMVRCV) traverse the membrane as a helical segment.

The protein belongs to the cortexin family.

The protein localises to the membrane. Functionally, may mediate extracellular or intracellular signaling of cortical neurons during forebrain development. This is Cortexin-1 (Ctxn1) from Mus musculus (Mouse).